The chain runs to 208 residues: dTTP/UTP pyrophosphatase (208 aa).

The active-site Proton acceptor is the D78.

Belongs to the Maf family. YhdE subfamily. It depends on a divalent metal cation as a cofactor.

The protein resides in the cytoplasm. It catalyses the reaction dTTP + H2O = dTMP + diphosphate + H(+). The catalysed reaction is UTP + H2O = UMP + diphosphate + H(+). Functionally, nucleoside triphosphate pyrophosphatase that hydrolyzes dTTP and UTP. May have a dual role in cell division arrest and in preventing the incorporation of modified nucleotides into cellular nucleic acids. The chain is dTTP/UTP pyrophosphatase from Maricaulis maris (strain MCS10) (Caulobacter maris).